The chain runs to 109 residues: Nucleoid-associated protein Plut_1285 (109 aa).

The protein belongs to the YbaB/EbfC family. As to quaternary structure, homodimer.

The protein resides in the cytoplasm. It localises to the nucleoid. In terms of biological role, binds to DNA and alters its conformation. May be involved in regulation of gene expression, nucleoid organization and DNA protection. In Chlorobium luteolum (strain DSM 273 / BCRC 81028 / 2530) (Pelodictyon luteolum), this protein is Nucleoid-associated protein Plut_1285.